Here is a 198-residue protein sequence, read N- to C-terminus: RNA-free ribonuclease P (198 aa).

Belongs to the HARP family.

It catalyses the reaction Endonucleolytic cleavage of RNA, removing 5'-extranucleotides from tRNA precursor.. RNA-free RNase P that catalyzes the removal of the 5'-leader sequence from pre-tRNA to produce the mature 5'-terminus. The protein is RNA-free ribonuclease P of Thermococcus kodakarensis (strain ATCC BAA-918 / JCM 12380 / KOD1) (Pyrococcus kodakaraensis (strain KOD1)).